The sequence spans 359 residues: Glycerol-3-phosphate dehydrogenase [NAD(P)+] (359 aa).

Residues Thr-11, Trp-12, Arg-32, and Lys-107 each coordinate NADPH. Sn-glycerol 3-phosphate-binding residues include Lys-107 and Gly-138. Ala-142 provides a ligand contact to NADPH. Sn-glycerol 3-phosphate-binding residues include Lys-193, Asp-246, Ser-256, Arg-257, and Asn-258. Residue Lys-193 is the Proton acceptor of the active site. Arg-257 is a binding site for NADPH. Val-281 and Glu-283 together coordinate NADPH.

The protein belongs to the NAD-dependent glycerol-3-phosphate dehydrogenase family.

The protein localises to the cytoplasm. The catalysed reaction is sn-glycerol 3-phosphate + NAD(+) = dihydroxyacetone phosphate + NADH + H(+). It carries out the reaction sn-glycerol 3-phosphate + NADP(+) = dihydroxyacetone phosphate + NADPH + H(+). It participates in membrane lipid metabolism; glycerophospholipid metabolism. Catalyzes the reduction of the glycolytic intermediate dihydroxyacetone phosphate (DHAP) to sn-glycerol 3-phosphate (G3P), the key precursor for phospholipid synthesis. The sequence is that of Glycerol-3-phosphate dehydrogenase [NAD(P)+] from Dehalococcoides mccartyi (strain ATCC BAA-2266 / KCTC 15142 / 195) (Dehalococcoides ethenogenes (strain 195)).